We begin with the raw amino-acid sequence, 708 residues long: Elongation factor G 1 (708 aa).

The tr-type G domain occupies 9–295 (AKVRNIGIMA…AVVRYLPTPL (287 aa)). Residues 18–25 (AHIDAGKT), 86–90 (DTPGH), and 140–143 (NKLD) contribute to the GTP site.

Belongs to the TRAFAC class translation factor GTPase superfamily. Classic translation factor GTPase family. EF-G/EF-2 subfamily.

Its subcellular location is the cytoplasm. In terms of biological role, catalyzes the GTP-dependent ribosomal translocation step during translation elongation. During this step, the ribosome changes from the pre-translocational (PRE) to the post-translocational (POST) state as the newly formed A-site-bound peptidyl-tRNA and P-site-bound deacylated tRNA move to the P and E sites, respectively. Catalyzes the coordinated movement of the two tRNA molecules, the mRNA and conformational changes in the ribosome. This chain is Elongation factor G 1 (fusA), found in Streptomyces coelicolor (strain ATCC BAA-471 / A3(2) / M145).